Consider the following 309-residue polypeptide: NAD kinase (309 aa).

Residue D89 is the Proton acceptor of the active site. NAD(+) is bound by residues D89–G90, N163–E164, H174, R191, D193, and T204–S209.

Belongs to the NAD kinase family. A divalent metal cation serves as cofactor.

Its subcellular location is the cytoplasm. The enzyme catalyses NAD(+) + ATP = ADP + NADP(+) + H(+). In terms of biological role, involved in the regulation of the intracellular balance of NAD and NADP, and is a key enzyme in the biosynthesis of NADP. Catalyzes specifically the phosphorylation on 2'-hydroxyl of the adenosine moiety of NAD to yield NADP. This is NAD kinase from Shewanella baltica (strain OS155 / ATCC BAA-1091).